We begin with the raw amino-acid sequence, 350 residues long: Arginine N-succinyltransferase (350 aa).

L125 lines the succinyl-CoA pocket. The Proton donor role is filled by H229.

It belongs to the arginine N-succinyltransferase family.

It carries out the reaction succinyl-CoA + L-arginine = N(2)-succinyl-L-arginine + CoA + H(+). The protein operates within amino-acid degradation; L-arginine degradation via AST pathway; L-glutamate and succinate from L-arginine: step 1/5. Catalyzes the transfer of succinyl-CoA to arginine to produce N(2)-succinylarginine. In Yersinia pseudotuberculosis serotype IB (strain PB1/+), this protein is Arginine N-succinyltransferase.